The primary structure comprises 201 residues: MAVEALHCGLNPRGIDHPAHAEGIKLQIEGEGVESQSIKNKNFQKVPDQKGTPKRLQAEAETAKSATVKLSKPVALWTQQDVCKWLKKHCPNQYQIYSESFKQHDITGRALLRLTDKKLERMGIAQENLRQHILQQVLQLKVREEVRNLQLLTQGTLLLPDGWMEGEMRRKSTLLLGQTGVRENLLLFLRRISFIENSIQI.

The SAM domain occupies 77–143 (WTQQDVCKWL…LQQVLQLKVR (67 aa)).

In Pongo abelii (Sumatran orangutan), this protein is Sterile alpha motif domain-containing protein 12 (SAMD12).